A 143-amino-acid polypeptide reads, in one-letter code: Lysozyme C (143 aa).

The signal sequence occupies residues 1–15; it reads MKIPVFLLLLALANA. A C-type lysozyme domain is found at 16 to 143; sequence KVFQRCEWAR…LSAYIAGCGL (128 aa). 4 disulfide bridges follow: Cys21/Cys141, Cys45/Cys129, Cys79/Cys94, and Cys90/Cys108. Catalysis depends on residues Glu50 and Asp67.

The protein belongs to the glycosyl hydrolase 22 family. In terms of assembly, monomer.

The protein resides in the secreted. The enzyme catalyses Hydrolysis of (1-&gt;4)-beta-linkages between N-acetylmuramic acid and N-acetyl-D-glucosamine residues in a peptidoglycan and between N-acetyl-D-glucosamine residues in chitodextrins.. Functionally, lysozymes have primarily a bacteriolytic function; those in tissues and body fluids are associated with the monocyte-macrophage system and enhance the activity of immunoagents. This chain is Lysozyme C, found in Takifugu rubripes (Japanese pufferfish).